The sequence spans 117 residues: MANTLDVANNLEQALRESDEFKSLKEAYEAVMGEPTAKQMFENFRDTQLSLQEKQMQGIEITEEEVEKARQVVETVQQHEGISKLMEEEQRLNNLINEISQIITKPLEDLYGTAEQN.

Belongs to the UPF0342 family.

The chain is UPF0342 protein OB1136 from Oceanobacillus iheyensis (strain DSM 14371 / CIP 107618 / JCM 11309 / KCTC 3954 / HTE831).